The following is a 360-amino-acid chain: Photosystem II protein D1 (360 aa).

A run of 3 helical transmembrane segments spans residues Tyr30–Ala47, His119–Leu134, and Trp143–Ala157. His119 provides a ligand contact to chlorophyll a. Tyr127 serves as a coordination point for pheophytin a. 2 residues coordinate [CaMn4O5] cluster: Asp171 and Glu190. A helical transmembrane segment spans residues Phe198–Leu219. His199 contributes to the chlorophyll a binding site. A quinone contacts are provided by residues His216 and Ser265 to Phe266. Residue His216 participates in Fe cation binding. Residue His273 coordinates Fe cation. Residues Phe275–Met289 traverse the membrane as a helical segment. 4 residues coordinate [CaMn4O5] cluster: His333, Glu334, Asp343, and Ala345. The propeptide occupies Ala346–Gly360.

This sequence belongs to the reaction center PufL/M/PsbA/D family. In terms of assembly, PSII is composed of 1 copy each of membrane proteins PsbA, PsbB, PsbC, PsbD, PsbE, PsbF, PsbH, PsbI, PsbJ, PsbK, PsbL, PsbM, PsbT, PsbX, PsbY, Psb30/Ycf12, peripheral proteins PsbO, CyanoQ (PsbQ), PsbU, PsbV and a large number of cofactors. It forms dimeric complexes. It depends on The D1/D2 heterodimer binds P680, chlorophylls that are the primary electron donor of PSII, and subsequent electron acceptors. It shares a non-heme iron and each subunit binds pheophytin, quinone, additional chlorophylls, carotenoids and lipids. D1 provides most of the ligands for the Mn4-Ca-O5 cluster of the oxygen-evolving complex (OEC). There is also a Cl(-1) ion associated with D1 and D2, which is required for oxygen evolution. The PSII complex binds additional chlorophylls, carotenoids and specific lipids. as a cofactor. Post-translationally, tyr-162 forms a radical intermediate that is referred to as redox-active TyrZ, YZ or Y-Z. In terms of processing, C-terminally processed by CtpA; processing is essential to allow assembly of the oxygen-evolving complex and thus photosynthetic growth.

The protein localises to the cellular thylakoid membrane. It carries out the reaction 2 a plastoquinone + 4 hnu + 2 H2O = 2 a plastoquinol + O2. Functionally, photosystem II (PSII) is a light-driven water:plastoquinone oxidoreductase that uses light energy to abstract electrons from H(2)O, generating O(2) and a proton gradient subsequently used for ATP formation. It consists of a core antenna complex that captures photons, and an electron transfer chain that converts photonic excitation into a charge separation. The D1/D2 (PsbA/PsbD) reaction center heterodimer binds P680, the primary electron donor of PSII as well as several subsequent electron acceptors. The protein is Photosystem II protein D1 of Prochlorococcus marinus (strain MIT 9312).